A 452-amino-acid chain; its full sequence is Putative purine permease CPE0397 (452 aa).

Helical transmembrane passes span 34 to 54 (IFAA…SLGF), 58 to 78 (VTTA…IIQA), 83 to 103 (KVGA…SPAI), 108 to 128 (VLGL…EVIL), 138 to 158 (FFPP…LLPV), 172 to 192 (YASL…LLLN), 201 to 221 (SASI…LGLV), 250 to 270 (MAFI…LKAI), 326 to 346 (AVMA…AAII), 348 to 368 (GIPN…VAAA), 383 to 403 (LLII…PDVI), and 412 to 432 (MIFS…NAVL).

This sequence belongs to the nucleobase:cation symporter-2 (NCS2) (TC 2.A.40) family.

Its subcellular location is the cell membrane. In Clostridium perfringens (strain 13 / Type A), this protein is Putative purine permease CPE0397 (cpx).